Consider the following 130-residue polypeptide: Calcium-binding protein KRP1 (130 aa).

Positions 72 to 107 (LTDEDVRCMIKEGDFDCDGALNQMEFCVLMFRLSPD) constitute an EF-hand domain. Positions 85, 87, 89, and 96 each coordinate Ca(2+).

In terms of biological role, potential calcium sensor that binds calcium in vitro. The protein is Calcium-binding protein KRP1 of Arabidopsis thaliana (Mouse-ear cress).